A 153-amino-acid chain; its full sequence is UPF0266 membrane protein YE1773 (153 aa).

Transmembrane regions (helical) follow at residues I6–M26, I45–N65, and E67–I87.

Belongs to the UPF0266 family.

Its subcellular location is the cell inner membrane. This chain is UPF0266 membrane protein YE1773, found in Yersinia enterocolitica serotype O:8 / biotype 1B (strain NCTC 13174 / 8081).